The primary structure comprises 135 residues: Sex-regulated protein janus-A (135 aa).

Lysine 37 contacts substrate. Histidine 63 serves as the catalytic Proton acceptor. Serine 104 to glycine 106 lines the substrate pocket.

This sequence belongs to the janus family.

JanA and janB regulate somatic sex differentiation. The polypeptide is Sex-regulated protein janus-A (janA) (Drosophila orena (Fruit fly)).